Reading from the N-terminus, the 181-residue chain is Peptidyl-tRNA hydrolase (181 aa).

Residue Y14 participates in tRNA binding. Residue H19 is the Proton acceptor of the active site. 3 residues coordinate tRNA: Y62, N64, and N108.

The protein belongs to the PTH family. In terms of assembly, monomer.

Its subcellular location is the cytoplasm. The catalysed reaction is an N-acyl-L-alpha-aminoacyl-tRNA + H2O = an N-acyl-L-amino acid + a tRNA + H(+). Functionally, hydrolyzes ribosome-free peptidyl-tRNAs (with 1 or more amino acids incorporated), which drop off the ribosome during protein synthesis, or as a result of ribosome stalling. Catalyzes the release of premature peptidyl moieties from peptidyl-tRNA molecules trapped in stalled 50S ribosomal subunits, and thus maintains levels of free tRNAs and 50S ribosomes. This is Peptidyl-tRNA hydrolase from Campylobacter jejuni (strain RM1221).